Reading from the N-terminus, the 423-residue chain is Endochitinase 1 (423 aa).

An N-terminal signal peptide occupies residues 1–22 (MPSLFAQSLAIIATLQATLGLA). A GH18 domain is found at 39–401 (YVNAVYFTNW…GTSSNKLGGP (363 aa)). 3 N-linked (GlcNAc...) asparagine glycosylation sites follow: Asn74, Asn78, and Asn96. Residues 103-104 (GT) and 130-133 (GGWT) contribute to the chitin site. Glu172 serves as the catalytic Proton donor. Residues Tyr173 and 238 to 241 (MAYD) contribute to the chitin site. Asn248 carries N-linked (GlcNAc...) asparagine glycosylation. Chitin is bound at residue Trp378. The disordered stretch occupies residues 380 to 423 (ASSDRSGSQSLIGTSSNKLGGPDSTENLLNYPDSKYDNMRKQMA). The span at 383–407 (DRSGSQSLIGTSSNKLGGPDSTENL) shows a compositional bias: polar residues. Residues 413–423 (SKYDNMRKQMA) show a composition bias toward basic and acidic residues.

It belongs to the glycosyl hydrolase 18 family. Chitinase class V subfamily.

It is found in the secreted. The catalysed reaction is Random endo-hydrolysis of N-acetyl-beta-D-glucosaminide (1-&gt;4)-beta-linkages in chitin and chitodextrins.. Its function is as follows. Secreted chitinase involved in the degradation of chitin, a component of the cell walls of fungi and exoskeletal elements of some animals (including worms and arthropods). Participates in the infection process and directly acts in the penetration process of the host cuticle. This chain is Endochitinase 1 (chit1), found in Metarhizium anisopliae (Entomophthora anisopliae).